Here is a 209-residue protein sequence, read N- to C-terminus: N-(5'-phosphoribosyl)anthranilate isomerase (209 aa).

This sequence belongs to the TrpF family.

It catalyses the reaction N-(5-phospho-beta-D-ribosyl)anthranilate = 1-(2-carboxyphenylamino)-1-deoxy-D-ribulose 5-phosphate. It participates in amino-acid biosynthesis; L-tryptophan biosynthesis; L-tryptophan from chorismate: step 3/5. The protein is N-(5'-phosphoribosyl)anthranilate isomerase of Pelobacter propionicus (strain DSM 2379 / NBRC 103807 / OttBd1).